The chain runs to 1373 residues: DNA-directed RNA polymerase subunit beta (1373 aa).

Belongs to the RNA polymerase beta chain family. In terms of assembly, the RNAP catalytic core consists of 2 alpha, 1 beta, 1 beta' and 1 omega subunit. When a sigma factor is associated with the core the holoenzyme is formed, which can initiate transcription.

The catalysed reaction is RNA(n) + a ribonucleoside 5'-triphosphate = RNA(n+1) + diphosphate. Its function is as follows. DNA-dependent RNA polymerase catalyzes the transcription of DNA into RNA using the four ribonucleoside triphosphates as substrates. This chain is DNA-directed RNA polymerase subunit beta, found in Rickettsia massiliae (strain Mtu5).